The chain runs to 119 residues: MSKVNQDIIKRIEEAQLKSDVPAFGPGDTVVVQVRVKEGEKERLQAYEGVVIAKRNRGLHSAFTVRKISSGEGVERTFQTHSPAISSIAVKRRGDVRRAKLYYLRDRSGRSARIKEKLN.

The protein belongs to the bacterial ribosomal protein bL19 family.

This protein is located at the 30S-50S ribosomal subunit interface and may play a role in the structure and function of the aminoacyl-tRNA binding site. The chain is Large ribosomal subunit protein bL19 from Pseudoalteromonas atlantica (strain T6c / ATCC BAA-1087).